A 161-amino-acid chain; its full sequence is ATP synthase subunit b 1 (161 aa).

The chain crosses the membrane as a helical span at residues Met-1–Gly-21.

This sequence belongs to the ATPase B chain family. In terms of assembly, F-type ATPases have 2 components, F(1) - the catalytic core - and F(0) - the membrane proton channel. F(1) has five subunits: alpha(3), beta(3), gamma(1), delta(1), epsilon(1). F(0) has three main subunits: a(1), b(2) and c(10-14). The alpha and beta chains form an alternating ring which encloses part of the gamma chain. F(1) is attached to F(0) by a central stalk formed by the gamma and epsilon chains, while a peripheral stalk is formed by the delta and b chains.

It is found in the cell inner membrane. F(1)F(0) ATP synthase produces ATP from ADP in the presence of a proton or sodium gradient. F-type ATPases consist of two structural domains, F(1) containing the extramembraneous catalytic core and F(0) containing the membrane proton channel, linked together by a central stalk and a peripheral stalk. During catalysis, ATP synthesis in the catalytic domain of F(1) is coupled via a rotary mechanism of the central stalk subunits to proton translocation. In terms of biological role, component of the F(0) channel, it forms part of the peripheral stalk, linking F(1) to F(0). This is ATP synthase subunit b 1 from Parvibaculum lavamentivorans (strain DS-1 / DSM 13023 / NCIMB 13966).